A 761-amino-acid polypeptide reads, in one-letter code: Prolyl endopeptidase FAP (761 aa).

Topologically, residues 1-4 (MKTW) are cytoplasmic. Residues 5-25 (LKTVFGVTTLAALALVVICIV) form a helical; Signal-anchor for type II membrane protein membrane-spanning segment. The Extracellular portion of the chain corresponds to 26–761 (LRPSRVYKPE…FLKQCFSLSD (736 aa)). N-linked (GlcNAc...) asparagine glycans are attached at residues asparagine 49, asparagine 92, and asparagine 99. Glutamate 203 and glutamate 204 together coordinate substrate. 2 N-linked (GlcNAc...) asparagine glycosylation sites follow: asparagine 227 and asparagine 314. Disulfide bonds link cysteine 321/cysteine 332, cysteine 438/cysteine 441, and cysteine 448/cysteine 466. Residue serine 624 is the Charge relay system of the active site. The cysteines at positions 643 and 756 are disulfide-linked. Asparagine 679 is a glycosylation site (N-linked (GlcNAc...) asparagine). Catalysis depends on charge relay system residues aspartate 702 and histidine 734.

Belongs to the peptidase S9B family. As to quaternary structure, homodimer; homodimerization is required for activity of both plasma membrane and soluble forms. The monomer is inactive. Heterodimer with DPP4. Interacts with PLAUR; the interaction occurs at the cell surface of invadopodia membranes. Interacts with ITGB1. Interacts with ITGA3. Associates with integrin alpha-3/beta-1; the association occurs in a collagen-dependent manner at the cell surface of invadopodia membranes. In terms of processing, N-glycosylated. Post-translationally, the N-terminus may be blocked. As to expression, expressed strongly in uterus, pancreas, submaxillary gland and skin, less in lymph node, ovary, skeletal muscle, adrenal and bone marrow. Expressed in reactive stromal fibroblast in epithelial cancers. Expressed in melanocytes but not melanomas (at protein level). Detected in fibroblasts, in placenta, uterus, embryos from day 7-19 and in newborn mice (P1).

The protein localises to the cell surface. It localises to the cell membrane. The protein resides in the cell projection. Its subcellular location is the lamellipodium membrane. It is found in the invadopodium membrane. The protein localises to the ruffle membrane. It localises to the membrane. The protein resides in the secreted. The catalysed reaction is Hydrolysis of Pro-|-Xaa &gt;&gt; Ala-|-Xaa in oligopeptides.. It catalyses the reaction Release of an N-terminal dipeptide, Xaa-Yaa-|-Zaa-, from a polypeptide, preferentially when Yaa is Pro, provided Zaa is neither Pro nor hydroxyproline.. Gelatinase activity is inhibited by serine-protease inhibitors, such as phenylmethylsulfonyl fluoride (PMSF), 4-(2-aminoethyl)-benzenesulfonyl fluoride hydrochloride (AEBSF), 4-amidino phenylsulfonyl fluoride (APSF) and diisopropyl fluorophosphate (DFP), N-ethylmaleimide (NEM) and phenylmethylsulfonyl fluoride (PMSF). Dipeptidyl peptidase activity is inhibited by 2,2'-azino-bis(3-ethylbenzthiazoline-6-sulfonic acid), diisopropylfluorophosphate (DFP). Prolyl endopeptidase activity is inhibited by the boronic acid peptide Ac-Gly-BoroPro, Ac-Gly-Pro-chloromethyl ketone and Thr-Ser-Gly-chloromethyl ketone. Cell surface glycoprotein serine protease that participates in extracellular matrix degradation and involved in many cellular processes including tissue remodeling, fibrosis, wound healing, inflammation and tumor growth. Both plasma membrane and soluble forms exhibit post-proline cleaving endopeptidase activity, with a marked preference for Ala/Ser-Gly-Pro-Ser/Asn/Ala consensus sequences, on substrate such as alpha-2-antiplasmin SERPINF2 and SPRY2. Degrade also gelatin, heat-denatured type I collagen, but not native collagen type I and IV, vibronectin, tenascin, laminin, fibronectin, fibrin or casein. Also has dipeptidyl peptidase activity, exhibiting the ability to hydrolyze the prolyl bond two residues from the N-terminus of synthetic dipeptide substrates provided that the penultimate residue is proline, with a preference for Ala-Pro, Ile-Pro, Gly-Pro, Arg-Pro and Pro-Pro. Natural neuropeptide hormones for dipeptidyl peptidase are the neuropeptide Y (NPY), peptide YY (PYY), substance P (TAC1) and brain natriuretic peptide 32 (NPPB). The plasma membrane form, in association with either DPP4, PLAUR or integrins, is involved in the pericellular proteolysis of the extracellular matrix (ECM), and hence promotes cell adhesion, migration and invasion through the ECM. Plays a role in tissue remodeling during development and wound healing. Participates in the cell invasiveness towards the ECM in malignant melanoma cancers. Enhances tumor growth progression by increasing angiogenesis, collagen fiber degradation and apoptosis and by reducing antitumor response of the immune system. Promotes glioma cell invasion through the brain parenchyma by degrading the proteoglycan brevican. Acts as a tumor suppressor in melanocytic cells through regulation of cell proliferation and survival in a serine protease activity-independent manner. This is Prolyl endopeptidase FAP from Mus musculus (Mouse).